A 544-amino-acid polypeptide reads, in one-letter code: Carboxypeptidase Y homolog A (544 aa).

The N-terminal stretch at 1–17 (MKSLALALLVGGAIASG) is a signal peptide. Positions 18 to 124 (PQQQVLREPV…RLDTYDLRVK (107 aa)) are excised as a propeptide. Disulfide bonds link C178–C417, C312–C326, C336–C359, C343–C352, and C381–C387. N209 carries an N-linked (GlcNAc...) asparagine glycan. The active site involves S265. Residue D456 is part of the active site. An N-linked (GlcNAc...) asparagine glycan is attached at N506. H517 is an active-site residue.

This sequence belongs to the peptidase S10 family.

Its subcellular location is the vacuole. The enzyme catalyses Release of a C-terminal amino acid with broad specificity.. Functionally, vacuolar carboxypeptidase involved in degradation of small peptides. Digests preferentially peptides containing an aliphatic or hydrophobic residue in P1' position, as well as methionine, leucine or phenylalanine in P1 position of ester substrate. The sequence is that of Carboxypeptidase Y homolog A (CPYA) from Ajellomyces capsulatus (strain G186AR / H82 / ATCC MYA-2454 / RMSCC 2432) (Darling's disease fungus).